Reading from the N-terminus, the 679-residue chain is Protein white (679 aa).

The disordered stretch occupies residues 1–34; that stretch reads MGQEDQEVLIRGGKATSTSAESLNNNNEQPYEQS. Over residues 15–34 the composition is skewed to polar residues; the sequence is ATSTSAESLNNNNEQPYEQS. In terms of domain architecture, ABC transporter spans 84–332; the sequence is NRVKGVFCNE…FSYIGATCPT (249 aa). 121 to 128 is a binding site for ATP; the sequence is GSSGAGKT. The next 5 membrane-spanning stretches (helical) occupy residues 427–445, 457–477, 507–525, 534–555, and 568–586; these read LLQT…LGQQ, AIFL…ITVF, LPLF…YPLI, FFTA…GYLI, and VGPP…FLNS. N-linked (GlcNAc...) asparagine glycosylation is found at asparagine 628 and asparagine 643. The chain crosses the membrane as a helical span at residues 651–670; that stretch reads FDFIGLALLIVGFRISAYIA.

It belongs to the ABC transporter superfamily. ABCG family. Eye pigment precursor importer (TC 3.A.1.204) subfamily.

The protein resides in the membrane. Functionally, may be part of a membrane-spanning permease system necessary for the transport of pigment precursors into pigment cells responsible for eye color. This chain is Protein white (W), found in Ceratitis capitata (Mediterranean fruit fly).